The primary structure comprises 281 residues: 2-dehydro-3-deoxyphosphooctonate aldolase (281 aa).

It belongs to the KdsA family.

It is found in the cytoplasm. It carries out the reaction D-arabinose 5-phosphate + phosphoenolpyruvate + H2O = 3-deoxy-alpha-D-manno-2-octulosonate-8-phosphate + phosphate. Its pathway is carbohydrate biosynthesis; 3-deoxy-D-manno-octulosonate biosynthesis; 3-deoxy-D-manno-octulosonate from D-ribulose 5-phosphate: step 2/3. The protein operates within bacterial outer membrane biogenesis; lipopolysaccharide biosynthesis. The sequence is that of 2-dehydro-3-deoxyphosphooctonate aldolase from Pseudomonas aeruginosa (strain UCBPP-PA14).